Reading from the N-terminus, the 209-residue chain is Uracil phosphoribosyltransferase (209 aa).

Residues Arg79, Arg104, and 131-139 (DPMLATGGS) each bind 5-phospho-alpha-D-ribose 1-diphosphate. Residues Ile194 and 199 to 201 (GDA) contribute to the uracil site. Asp200 is a binding site for 5-phospho-alpha-D-ribose 1-diphosphate.

It belongs to the UPRTase family. Mg(2+) is required as a cofactor.

The enzyme catalyses UMP + diphosphate = 5-phospho-alpha-D-ribose 1-diphosphate + uracil. Its pathway is pyrimidine metabolism; UMP biosynthesis via salvage pathway; UMP from uracil: step 1/1. Its activity is regulated as follows. Allosterically activated by GTP. In terms of biological role, catalyzes the conversion of uracil and 5-phospho-alpha-D-ribose 1-diphosphate (PRPP) to UMP and diphosphate. The sequence is that of Uracil phosphoribosyltransferase from Francisella tularensis subsp. novicida (strain U112).